The chain runs to 311 residues: Pyrimidine-specific ribonucleoside hydrolase RihA (311 aa).

The active site involves His-240.

It belongs to the IUNH family. RihA subfamily.

In terms of biological role, hydrolyzes cytidine or uridine to ribose and cytosine or uracil, respectively. The sequence is that of Pyrimidine-specific ribonucleoside hydrolase RihA from Salmonella gallinarum (strain 287/91 / NCTC 13346).